The primary structure comprises 282 residues: Undecaprenyl-diphosphatase (282 aa).

Transmembrane regions (helical) follow at residues 1 to 21 (MTLIQAILLGIIQGLTEFLPI), 39 to 59 (PGAAFTAIIQIGTLGAVMLYF), 85 to 105 (AKMGWMIAAGTLPIVAFGLLF), 115 to 135 (SLYWISGALIILALVLSLAEW), 153 to 173 (IGWKEALLIGLAQAIALIPGS), 193 to 213 (AARFSFLLSLPAVFAAGAFEL), 229 to 249 (NLAVATITSGIVGYLSIAFLL), and 259 to 279 (IFIAYRLAAGAGLLLLLGGGT).

This sequence belongs to the UppP family.

It is found in the cell inner membrane. The catalysed reaction is di-trans,octa-cis-undecaprenyl diphosphate + H2O = di-trans,octa-cis-undecaprenyl phosphate + phosphate + H(+). Catalyzes the dephosphorylation of undecaprenyl diphosphate (UPP). Confers resistance to bacitracin. The protein is Undecaprenyl-diphosphatase of Chlorobium luteolum (strain DSM 273 / BCRC 81028 / 2530) (Pelodictyon luteolum).